A 125-amino-acid chain; its full sequence is Small ribosomal subunit protein uS12 (125 aa).

Residues 1 to 28 form a disordered region; sequence MPTISQLIGSERKRLTRKTKSPALKSCP. Residue D89 is modified to 3-methylthioaspartic acid. The disordered stretch occupies residues 104–125; that stretch reads TAGVKDRRQSRSKYGAKAPKNN.

It belongs to the universal ribosomal protein uS12 family. As to quaternary structure, part of the 30S ribosomal subunit. Contacts proteins S8 and S17. May interact with IF1 in the 30S initiation complex.

In terms of biological role, with S4 and S5 plays an important role in translational accuracy. Interacts with and stabilizes bases of the 16S rRNA that are involved in tRNA selection in the A site and with the mRNA backbone. Located at the interface of the 30S and 50S subunits, it traverses the body of the 30S subunit contacting proteins on the other side and probably holding the rRNA structure together. The combined cluster of proteins S8, S12 and S17 appears to hold together the shoulder and platform of the 30S subunit. This Prochlorococcus marinus (strain MIT 9515) protein is Small ribosomal subunit protein uS12.